The chain runs to 590 residues: Monoterepene synthase TPS1, chloropastic (590 aa).

The N-terminal 42 residues, M1–A42, are a transit peptide targeting the chloroplast. (2E)-geranyl diphosphate contacts are provided by R304, D341, D345, R483, and D486. Mg(2+)-binding residues include D341 and D345. The DDXXD motif signature appears at D341–D345. Residues D486, T490, and E494 each contribute to the Mg(2+) site.

Belongs to the terpene synthase family. Tpsb subfamily. Monomer. It depends on Mg(2+) as a cofactor.

It is found in the plastid. Its subcellular location is the chloroplast. It catalyses the reaction (2E)-geranyl diphosphate = beta-thujene + diphosphate. The catalysed reaction is (2E)-geranyl diphosphate = sabinene + diphosphate. It carries out the reaction (2E)-geranyl diphosphate = beta-pinene + diphosphate. The enzyme catalyses (2E)-geranyl diphosphate = alpha-terpinene + diphosphate. It functions in the pathway secondary metabolite biosynthesis; terpenoid biosynthesis. Monoterpene synthase involved in the biosynthesis of volatile organic compounds. Mediates the conversion of (2E)-geranyl diphosphate (GPP) into beta-thujene, sabinene, beta-pinene and alpha-terpinene. Does not use (2E,6E)-farnesyl diphosphate (FPP) as substrate. This Cananga odorata (Ylang-ylang tree) protein is Monoterepene synthase TPS1, chloropastic.